Here is a 229-residue protein sequence, read N- to C-terminus: Large ribosomal subunit protein uL1 (229 aa).

It belongs to the universal ribosomal protein uL1 family. In terms of assembly, part of the 50S ribosomal subunit.

Binds directly to 23S rRNA. The L1 stalk is quite mobile in the ribosome, and is involved in E site tRNA release. Functionally, protein L1 is also a translational repressor protein, it controls the translation of the L11 operon by binding to its mRNA. This Mycoplasmopsis pulmonis (strain UAB CTIP) (Mycoplasma pulmonis) protein is Large ribosomal subunit protein uL1.